The following is a 482-amino-acid chain: Thymidine phosphorylase (482 aa).

A propeptide spanning residues 1–10 is cleaved from the precursor; sequence MAALMTPGTG. Residues 1–36 form a disordered region; sequence MAALMTPGTGAPPAPGDFSGEGSQGLPDPSPEPKQL. Thr6 carries the post-translational modification Phosphothreonine. Substrate is bound by residues His116, Arg202, Ser217, and Lys221. R-V-A-A-A-L-X(5,6)-L-G-R repeat units follow at residues 265–279 and 329–342; these read RVAA…PLGR and RVAA…ALGR. R-A-L-X-X-A-L-V-L repeat units follow at residues 393–401 and 453–461; these read RALPLALVL and RALQEALVL.

This sequence belongs to the thymidine/pyrimidine-nucleoside phosphorylase family. As to quaternary structure, homodimer.

The catalysed reaction is thymidine + phosphate = 2-deoxy-alpha-D-ribose 1-phosphate + thymine. It participates in pyrimidine metabolism; dTMP biosynthesis via salvage pathway; dTMP from thymine: step 1/2. Functionally, may have a role in maintaining the integrity of the blood vessels. Has growth promoting activity on endothelial cells, angiogenic activity in vivo and chemotactic activity on endothelial cells in vitro. Catalyzes the reversible phosphorolysis of thymidine. The produced molecules are then utilized as carbon and energy sources or in the rescue of pyrimidine bases for nucleotide synthesis. The chain is Thymidine phosphorylase from Homo sapiens (Human).